The sequence spans 887 residues: Pyruvate dehydrogenase E1 component (887 aa).

As to quaternary structure, homodimer. Part of the PDH complex, consisting of multiple copies of pyruvate dehydrogenase (E1), dihydrolipoamide acetyltransferase (E2) and lipoamide dehydrogenase (E3). Thiamine diphosphate is required as a cofactor.

The enzyme catalyses N(6)-[(R)-lipoyl]-L-lysyl-[protein] + pyruvate + H(+) = N(6)-[(R)-S(8)-acetyldihydrolipoyl]-L-lysyl-[protein] + CO2. In terms of biological role, component of the pyruvate dehydrogenase (PDH) complex, that catalyzes the overall conversion of pyruvate to acetyl-CoA and CO(2). This is Pyruvate dehydrogenase E1 component (aceE) from Buchnera aphidicola subsp. Baizongia pistaciae (strain Bp).